A 504-amino-acid polypeptide reads, in one-letter code: Ent-kaurene oxidase-like 3 (504 aa).

Residues 3–23 (SLLAAGAGGIGVAAAAVGGFI) form a helical membrane-spanning segment. Cysteine 448 serves as a coordination point for heme.

Belongs to the cytochrome P450 family. Heme is required as a cofactor. As to expression, expressed in leaf blades.

Its subcellular location is the membrane. Functionally, may hydroxylate diterpenes. This chain is Ent-kaurene oxidase-like 3, found in Oryza sativa subsp. japonica (Rice).